The following is a 435-amino-acid chain: Trigger factor (435 aa).

A PPIase FKBP-type domain is found at 163–248 (GDTVTIDFDG…IHEIKTKELP (86 aa)).

It belongs to the FKBP-type PPIase family. Tig subfamily.

The protein resides in the cytoplasm. The enzyme catalyses [protein]-peptidylproline (omega=180) = [protein]-peptidylproline (omega=0). Functionally, involved in protein export. Acts as a chaperone by maintaining the newly synthesized protein in an open conformation. Functions as a peptidyl-prolyl cis-trans isomerase. This Pediococcus pentosaceus (strain ATCC 25745 / CCUG 21536 / LMG 10740 / 183-1w) protein is Trigger factor.